Consider the following 168-residue polypeptide: Transcriptional repressor NrdR (168 aa).

The interval 1 to 21 (MQCPACRHTDSRVLESRSSES) is disordered. A zinc finger lies at 3–34 (CPACRHTDSRVLESRSSESGRSVRRRRECLSC). Basic and acidic residues predominate over residues 7–20 (RHTDSRVLESRSSE). The 91-residue stretch at 49–139 (ISVIKRNGDR…VYRQFRGVRD (91 aa)) folds into the ATP-cone domain.

It belongs to the NrdR family. Zn(2+) serves as cofactor.

Negatively regulates transcription of bacterial ribonucleotide reductase nrd genes and operons by binding to NrdR-boxes. The sequence is that of Transcriptional repressor NrdR from Synechococcus elongatus (strain ATCC 33912 / PCC 7942 / FACHB-805) (Anacystis nidulans R2).